A 105-amino-acid chain; its full sequence is uncharacterized protein (105 aa).

Residues 1 to 48 are Extracellular-facing; the sequence is MAPKAFFVCLPWVLPRHALIVRQAGNPYHFLAYTNPRAPGKLQDSHCP. The chain crosses the membrane as a helical span at residues 49–69; that stretch reads VFFMGIIIITIITVTLAIIII. Position 70 (N70) is a topological domain, cytoplasmic. The chain crosses the membrane as a helical span at residues 71–91; that stretch reads IIFLTLFDDGMCFYCSLLTFS. The Extracellular portion of the chain corresponds to 92–105; it reads FVSFNFDHFDHFDL.

It is found in the membrane. This is an uncharacterized protein from Saccharomyces cerevisiae (strain ATCC 204508 / S288c) (Baker's yeast).